Consider the following 196-residue polypeptide: UMP-CMP kinase (196 aa).

13-18 (GAGKGT) is an ATP binding site. Positions 33–63 (SAGDLLRDERKRPGSQYGELIENYIKEGEIV) are NMP. A ribonucleoside 5'-phosphate contacts are provided by residues arginine 39, 61 to 63 (EIV), and 93 to 96 (GFPR). Asparagine 100 provides a ligand contact to CMP. Residues 133 to 143 (ERGKSSGRSDD) form an LID region. Position 134 (arginine 134) interacts with ATP. Residues arginine 140 and arginine 151 each coordinate a ribonucleoside 5'-phosphate. Lysine 179 contacts ATP.

It belongs to the adenylate kinase family. UMP-CMP kinase subfamily. In terms of assembly, monomer. The cofactor is Mg(2+).

Its subcellular location is the nucleus. The protein localises to the cytoplasm. The catalysed reaction is CMP + ATP = CDP + ADP. The enzyme catalyses dCMP + ATP = dCDP + ADP. It catalyses the reaction UMP + ATP = UDP + ADP. It carries out the reaction a 2'-deoxyribonucleoside 5'-diphosphate + ATP = a 2'-deoxyribonucleoside 5'-triphosphate + ADP. The catalysed reaction is a ribonucleoside 5'-diphosphate + ATP = a ribonucleoside 5'-triphosphate + ADP. In terms of biological role, catalyzes the phosphorylation of pyrimidine nucleoside monophosphates at the expense of ATP. Plays an important role in de novo pyrimidine nucleotide biosynthesis. Has preference for UMP and CMP as phosphate acceptors. Also displays broad nucleoside diphosphate kinase activity. This is UMP-CMP kinase (CMPK) from Gallus gallus (Chicken).